A 65-amino-acid chain; its full sequence is MRTFLFLFVVLFFLTPAKNAFFDDKCDKLRGTCKNSCEKNEELTSFCQKSLKCCRTIQTCGNTTD.

The N-terminal stretch at 1–20 (MRTFLFLFVVLFFLTPAKNA) is a signal peptide. Cystine bridges form between cysteine 26–cysteine 53, cysteine 33–cysteine 47, and cysteine 37–cysteine 54.

This sequence belongs to the beta-defensin family. As to quaternary structure, monomer. Interacts with CCR2 (via extracellular N-terminal region); this interaction may preferentially require specific tyrosine sulfation on CCR2.

The protein localises to the secreted. The protein resides in the membrane. Functionally, has antibacterial activity. Acts as a ligand for C-C chemokine receptor CCR2. The sequence is that of Beta-defensin 106A (DEFB106A) from Hylobates lar (Lar gibbon).